Reading from the N-terminus, the 609-residue chain is UvrABC system protein C (609 aa).

The GIY-YIG domain maps to 19–97 (ASPGCYLWKS…IKKHNPRFNV (79 aa)). Residues 208-243 (ESLVSDLNIKMSNASERLDFEKAARYRDMLQRIQNF) form the UVR domain.

Belongs to the UvrC family. As to quaternary structure, interacts with UvrB in an incision complex.

Its subcellular location is the cytoplasm. In terms of biological role, the UvrABC repair system catalyzes the recognition and processing of DNA lesions. UvrC both incises the 5' and 3' sides of the lesion. The N-terminal half is responsible for the 3' incision and the C-terminal half is responsible for the 5' incision. This Leptospira interrogans serogroup Icterohaemorrhagiae serovar copenhageni (strain Fiocruz L1-130) protein is UvrABC system protein C.